The sequence spans 460 residues: MATGKIVQVIGAVVDVDFPQDAVPRVYDALEVQNGNEKLVLEVQQQLGGGIVRTIAMGSSDGLRRGLDVKDLEHPIEVPVGKATLGRIMNVLGEPVDMKGEIGEEERWAIHRAAPSYEELSNSQELLETGIKVIDLMCPFAKGGKVGLFGGAGVGKTVNMMELIRNIAIEHSGYSVFAGVGERTREGNDFYHEMTDSNVIDKVSLVYGQMNEPPGNRLRVALTGLTMAEKFRDEGRDVLLFVDNIYRYTLAGTEVSALLGRMPSAVGYQPTLAEEMGVLQERITSTKTGSITSVQAVYVPADDLTDPSPATTFAHLDATVVLSRQIASLGIYPAVDPLDSTSRQLDPLVVGQEHYDTARGVQSILQRYQELKDIIAILGMDELSEEDKLVVARARKIQRFLSQPFFVAEVFTGSPGKYVSLKDTIRGFKGIMEGEYDHLPEQAFYMVGSIDEAVEKAKKL.

150–157 is a binding site for ATP; the sequence is GGAGVGKT.

Belongs to the ATPase alpha/beta chains family. In terms of assembly, F-type ATPases have 2 components, CF(1) - the catalytic core - and CF(0) - the membrane proton channel. CF(1) has five subunits: alpha(3), beta(3), gamma(1), delta(1), epsilon(1). CF(0) has three main subunits: a(1), b(2) and c(9-12). The alpha and beta chains form an alternating ring which encloses part of the gamma chain. CF(1) is attached to CF(0) by a central stalk formed by the gamma and epsilon chains, while a peripheral stalk is formed by the delta and b chains.

The protein resides in the cell inner membrane. It catalyses the reaction ATP + H2O + 4 H(+)(in) = ADP + phosphate + 5 H(+)(out). In terms of biological role, produces ATP from ADP in the presence of a proton gradient across the membrane. The catalytic sites are hosted primarily by the beta subunits. The chain is ATP synthase subunit beta from Salmonella paratyphi A (strain ATCC 9150 / SARB42).